Reading from the N-terminus, the 529-residue chain is Ell-associated factor Eaf (529 aa).

2 disordered regions span residues 155–235 (AAGS…PMIT) and 253–529 (ANIS…DDDD). Positions 167–186 (ENSTMRISSKTKVSTGSRRN) are enriched in polar residues. 4 stretches are compositionally biased toward low complexity: residues 194-215 (RNSPMQQSSPSRPVVSHRSPQS), 256-265 (SGSSTGSSSG), 306-315 (HQNQQQQQQN), and 327-346 (QQQHQQQMQQQQQQHQQQQQ). The residue at position 196 (Ser196) is a Phosphoserine. A compositionally biased stretch (polar residues) spans 347–359 (RASFSHSNHSNSM). Over residues 401-416 (DSSDTDSGSDSDDSTD) the composition is skewed to acidic residues. 4 stretches are compositionally biased toward low complexity: residues 431–451 (HQQQHHQMQQQHQQQQQHMHQ), 469–480 (QHQQQQQQPPQQ), 488–499 (QQQQQQQQQQQS), and 510–523 (NDLLQNDLQLSSNS).

It belongs to the EAF family.

It is found in the nucleus. Its function is as follows. Promotes transcriptional elongation by Su(Tpl)/ELL. Essential for development. This Drosophila grimshawi (Hawaiian fruit fly) protein is Ell-associated factor Eaf.